Reading from the N-terminus, the 249-residue chain is 1-(5-phosphoribosyl)-5-[(5-phosphoribosylamino)methylideneamino] imidazole-4-carboxamide isomerase (249 aa).

The Proton acceptor role is filled by D8. D129 acts as the Proton donor in catalysis.

It belongs to the HisA/HisF family.

The protein resides in the cytoplasm. It catalyses the reaction 1-(5-phospho-beta-D-ribosyl)-5-[(5-phospho-beta-D-ribosylamino)methylideneamino]imidazole-4-carboxamide = 5-[(5-phospho-1-deoxy-D-ribulos-1-ylimino)methylamino]-1-(5-phospho-beta-D-ribosyl)imidazole-4-carboxamide. Its pathway is amino-acid biosynthesis; L-histidine biosynthesis; L-histidine from 5-phospho-alpha-D-ribose 1-diphosphate: step 4/9. This is 1-(5-phosphoribosyl)-5-[(5-phosphoribosylamino)methylideneamino] imidazole-4-carboxamide isomerase from Nitratidesulfovibrio vulgaris (strain ATCC 29579 / DSM 644 / CCUG 34227 / NCIMB 8303 / VKM B-1760 / Hildenborough) (Desulfovibrio vulgaris).